The sequence spans 310 residues: Adenylyl-sulfate kinase 4, chloroplastic (310 aa).

A chloroplast-targeting transit peptide spans 1-75 (MDVAAMARCV…MAKDESISSR (75 aa)). An ATP-binding site is contributed by 116 to 124 (GLSGSGKSS). Substrate contacts are provided by residues D146, R149, R163, N166, 189–190 (IS), and G239. The Phosphoserine intermediate role is filled by S190.

This sequence belongs to the APS kinase family. Homodimer; disulfide-linked. As to expression, expressed in root vasculature, root tips, leaf epidermal and guard cells, pollen grains and radicle of immature seeds.

The protein resides in the plastid. Its subcellular location is the chloroplast. It carries out the reaction adenosine 5'-phosphosulfate + ATP = 3'-phosphoadenylyl sulfate + ADP + H(+). Its pathway is sulfur metabolism; hydrogen sulfide biosynthesis; sulfite from sulfate: step 2/3. Its function is as follows. Catalyzes the phosphorylation of adenosine 5'-phosphosulfate to 3'-phosphoadenylyl sulfate, which is the activated sulfate form for sulfation reactions. Essential for plant reproduction and viability. This is Adenylyl-sulfate kinase 4, chloroplastic (APK4) from Arabidopsis thaliana (Mouse-ear cress).